Here is a 238-residue protein sequence, read N- to C-terminus: Probable transcriptional regulatory protein SGO_0454 (238 aa).

It belongs to the TACO1 family. YeeN subfamily.

It localises to the cytoplasm. This chain is Probable transcriptional regulatory protein SGO_0454, found in Streptococcus gordonii (strain Challis / ATCC 35105 / BCRC 15272 / CH1 / DL1 / V288).